Consider the following 170-residue polypeptide: uncharacterized protein (170 aa).

This is an uncharacterized protein from Acidianus bottle-shaped virus (isolate Italy/Pozzuoli) (ABV).